A 303-amino-acid chain; its full sequence is Protoheme IX farnesyltransferase (303 aa).

A run of 9 helical transmembrane segments spans residues 25-45, 54-74, 104-124, 125-145, 151-171, 179-199, 227-247, 248-268, and 280-300; these read MGLVQGNLIPAFAGAWLAVVM, IPQILLMLLGSTLIMGGACAL, LLLLSFGMMLVGEICLFLLNI, PSGVLGLMGIVGYVSYYSIWS, WNTVIGSFPGAVPPLIGWVAI, AIALFLVVFCWQPIHFYALAI, FIWLIILLPVPLLLINLGVVF, VVLATLLNLGWIALGLTTFKK, and FIYSLNYLVIFFVLAVIVSLL.

It belongs to the UbiA prenyltransferase family. Protoheme IX farnesyltransferase subfamily. In terms of assembly, interacts with CtaA.

It is found in the cell membrane. It carries out the reaction heme b + (2E,6E)-farnesyl diphosphate + H2O = Fe(II)-heme o + diphosphate. Its pathway is porphyrin-containing compound metabolism; heme O biosynthesis; heme O from protoheme: step 1/1. Its function is as follows. Converts heme B (protoheme IX) to heme O by substitution of the vinyl group on carbon 2 of heme B porphyrin ring with a hydroxyethyl farnesyl side group. The protein is Protoheme IX farnesyltransferase of Staphylococcus aureus (strain bovine RF122 / ET3-1).